The following is a 248-amino-acid chain: 3-deoxy-manno-octulosonate cytidylyltransferase (248 aa).

Belongs to the KdsB family.

The protein localises to the cytoplasm. The enzyme catalyses 3-deoxy-alpha-D-manno-oct-2-ulosonate + CTP = CMP-3-deoxy-beta-D-manno-octulosonate + diphosphate. Its pathway is nucleotide-sugar biosynthesis; CMP-3-deoxy-D-manno-octulosonate biosynthesis; CMP-3-deoxy-D-manno-octulosonate from 3-deoxy-D-manno-octulosonate and CTP: step 1/1. The protein operates within bacterial outer membrane biogenesis; lipopolysaccharide biosynthesis. Functionally, activates KDO (a required 8-carbon sugar) for incorporation into bacterial lipopolysaccharide in Gram-negative bacteria. This Escherichia coli O127:H6 (strain E2348/69 / EPEC) protein is 3-deoxy-manno-octulosonate cytidylyltransferase.